The chain runs to 562 residues: NAD-dependent malic enzyme 1 (562 aa).

Catalysis depends on Y101, which acts as the Proton donor. R154 is a binding site for NAD(+). The active-site Proton acceptor is the K172. A divalent metal cation contacts are provided by E243, D244, and D267. NAD(+) is bound by residues D267 and N415.

This sequence belongs to the malic enzymes family. Homotetramer. It depends on Mg(2+) as a cofactor. Requires Mn(2+) as cofactor.

It carries out the reaction (S)-malate + NAD(+) = pyruvate + CO2 + NADH. It catalyses the reaction oxaloacetate + H(+) = pyruvate + CO2. This is NAD-dependent malic enzyme 1 from Vibrio vulnificus (strain YJ016).